Consider the following 163-residue polypeptide: uncharacterized protein (163 aa).

Residues methionine 1–arginine 10 are compositionally biased toward basic and acidic residues. The disordered stretch occupies residues methionine 1 to serine 163.

This is an uncharacterized protein from Homo sapiens (Human).